We begin with the raw amino-acid sequence, 221 residues long: Ependymin-2 (221 aa).

The first 21 residues, 1 to 21 (MQDFAFAALSIWLCLGATALA), serve as a signal peptide directing secretion. N-linked (GlcNAc...) asparagine glycans are attached at residues N33, N73, and N97.

It belongs to the ependymin family. Binds calcium through the terminal sialic acids. EPDs are synthesized in the meninx and secreted in the cerebrospinal fluid.

It localises to the secreted. Its function is as follows. May play a role in neural plasticity. May be involved during axon regeneration. In Salmo salar (Atlantic salmon), this protein is Ependymin-2 (epd2).